Here is a 196-residue protein sequence, read N- to C-terminus: Pyridoxal 5'-phosphate synthase subunit PdxT (196 aa).

46 to 48 (GES) lines the L-glutamine pocket. Residue cysteine 78 is the Nucleophile of the active site. Residues arginine 105 and 133 to 134 (IR) each bind L-glutamine. Catalysis depends on charge relay system residues histidine 169 and glutamate 171.

This sequence belongs to the glutaminase PdxT/SNO family. As to quaternary structure, in the presence of PdxS, forms a dodecamer of heterodimers. Only shows activity in the heterodimer.

The catalysed reaction is aldehydo-D-ribose 5-phosphate + D-glyceraldehyde 3-phosphate + L-glutamine = pyridoxal 5'-phosphate + L-glutamate + phosphate + 3 H2O + H(+). The enzyme catalyses L-glutamine + H2O = L-glutamate + NH4(+). The protein operates within cofactor biosynthesis; pyridoxal 5'-phosphate biosynthesis. Functionally, catalyzes the hydrolysis of glutamine to glutamate and ammonia as part of the biosynthesis of pyridoxal 5'-phosphate. The resulting ammonia molecule is channeled to the active site of PdxS. The polypeptide is Pyridoxal 5'-phosphate synthase subunit PdxT (Geobacillus stearothermophilus (Bacillus stearothermophilus)).